The primary structure comprises 394 residues: MPDKFKRVHVVVMDSVGIGEAPDAAKFGDFDVDTFGHIAKHVGGLKMPEMGKLGLSNIREIDGIKKAEKPLAYYTKMQEASNGKDTMTGHWEIMGLYIDTPFRVFPDGFPDDLINQIEEKTGRKVIGNKPASGTEIMAELGEEHVKTGALIVYTSADSVLQIAAHEDVVPLEELYEICEFCRKITLDDPYMLGRIIARPFVGEPGAFVRTPNRHDYALKPFKPTVMDALKDGGKDVIAIGKISDIFDGEGVTESIRTKSNMDGMDQFIAVLDKDFNGMSFLNLVDFDALFGHRRDPQGYADALVDFDGRLVEVMEKLTDDDLLIITADHGNDPTYSGTDHTREFVPLLVYSPRFKNGGSELELRKTFADLGATVADNFEVKMPEYGTSFLKDLK.

Residues aspartate 14, aspartate 287, histidine 292, aspartate 328, histidine 329, and histidine 340 each contribute to the Mn(2+) site.

It belongs to the phosphopentomutase family. Mn(2+) is required as a cofactor.

The protein resides in the cytoplasm. It catalyses the reaction 2-deoxy-alpha-D-ribose 1-phosphate = 2-deoxy-D-ribose 5-phosphate. The catalysed reaction is alpha-D-ribose 1-phosphate = D-ribose 5-phosphate. The protein operates within carbohydrate degradation; 2-deoxy-D-ribose 1-phosphate degradation; D-glyceraldehyde 3-phosphate and acetaldehyde from 2-deoxy-alpha-D-ribose 1-phosphate: step 1/2. In terms of biological role, isomerase that catalyzes the conversion of deoxy-ribose 1-phosphate (dRib-1-P) and ribose 1-phosphate (Rib-1-P) to deoxy-ribose 5-phosphate (dRib-5-P) and ribose 5-phosphate (Rib-5-P), respectively. This Listeria monocytogenes serotype 4b (strain CLIP80459) protein is Phosphopentomutase.